Consider the following 598-residue polypeptide: MSFITSAHATAAQVPLTTSQMLGQKLMLDFRYYCGESKKPSGDCRAAMTTLPPELSELISRYDIGGAILFAENVQNTAQIISLTNALQSAAQQSKSQLPLFIAIDQEGGRVARINREQATSFTGNMSIGATYPKQGDIYATKVASAIGKELNSLGINVNFAPTVDVNSNPNNPVINVRSFSENPTVVTKLGLAQVKAFEAAGVLSALKHFPGHGDTHVDSHTGLPRVDHDRDKINQQDLLPFAEIIKASPPGMIMTAHIQYPALDNSKVVNSQGESMIRPATMSYQIMTQLLRHELGYQGVTVTDALDMAGISDFFNPVDATIETFNAGVDIALMPIAIRNRADIKRFEQYMAQLADALETNKLNQEQLSSSMARIAKLKTKLPQSSASLAIANSTLGNPSHRRLEAELALAAITEVKNDGVLPLRDNAQVVHLIMPDRQKCFALEQALQTYSKNSLTLSCTSLQAYDPDIAHDAIKQADMIIAAHASPPQSAVEIGGMDDVKKLREHGVARNVQPAALKALLQYGQQQGKKQLFISLRAPYEISTFGPLSNAVLASYAYNVDVNHDKKVAGPAYTALAKVILGIAKAEGSLPVTVNH.

Positions 1 to 11 are cleaved as a signal peptide; sequence MSFITSAHATA. D305 is a catalytic residue.

Belongs to the glycosyl hydrolase 3 family.

The enzyme catalyses Hydrolysis of terminal non-reducing N-acetyl-D-hexosamine residues in N-acetyl-beta-D-hexosaminides.. Its function is as follows. Most active towards p-nitrophenyl-N-acetyl-beta-D-glucosaminide(PNP-beta-GlcNAc) and diacetylchitobiose. This chain is Beta-hexosaminidase A (cht60), found in Pseudoalteromonas piscicida.